The primary structure comprises 629 residues: Chaperone protein DnaK (629 aa).

A compositionally biased stretch (low complexity) spans 576 to 587; the sequence is QAYQQQQDAQAG. The disordered stretch occupies residues 576 to 629; the sequence is QAYQQQQDAQAGAAGGAGGMGGMGGMADGPGGAADADGDDEEYVDADFEDVDEE. Over residues 588–607 the composition is skewed to gly residues; sequence AAGGAGGMGGMGGMADGPGG. Acidic residues predominate over residues 611 to 629; that stretch reads ADGDDEEYVDADFEDVDEE.

This sequence belongs to the heat shock protein 70 family.

Its function is as follows. Acts as a chaperone. The protein is Chaperone protein DnaK of Halobacterium salinarum (strain ATCC 29341 / DSM 671 / R1).